The primary structure comprises 234 residues: Large ribosomal subunit protein uL1 (234 aa).

It belongs to the universal ribosomal protein uL1 family. As to quaternary structure, part of the 50S ribosomal subunit.

Binds directly to 23S rRNA. The L1 stalk is quite mobile in the ribosome, and is involved in E site tRNA release. Its function is as follows. Protein L1 is also a translational repressor protein, it controls the translation of the L11 operon by binding to its mRNA. In Erwinia tasmaniensis (strain DSM 17950 / CFBP 7177 / CIP 109463 / NCPPB 4357 / Et1/99), this protein is Large ribosomal subunit protein uL1.